We begin with the raw amino-acid sequence, 24 residues long: Acetylcholine receptor subunit alpha (24 aa).

This sequence belongs to the ligand-gated ion channel (TC 1.A.9) family. Acetylcholine receptor (TC 1.A.9.1) subfamily. Alpha-1/CHRNA1 sub-subfamily. In terms of assembly, one of the alpha chains that assemble within the acetylcholine receptor, a pentamer of two alpha chains, a beta, a delta, and a gamma or epsilon chains.

It localises to the postsynaptic cell membrane. The protein localises to the cell membrane. It carries out the reaction K(+)(in) = K(+)(out). The catalysed reaction is Na(+)(in) = Na(+)(out). Its function is as follows. Upon acetylcholine binding, the AChR responds by an extensive change in conformation that affects all subunits and leads to opening of an ion-conducting channel across the plasma membrane. This chain is Acetylcholine receptor subunit alpha (chrna1), found in Electrophorus electricus (Electric eel).